The sequence spans 477 residues: Glutamate--tRNA ligase 2 (477 aa).

The 'HIGH' region signature appears at 9 to 19 (PSPTGFLHIGG). Positions 238–242 (KLSKR) match the 'KMSKS' region motif. Lys241 contributes to the ATP binding site.

The protein belongs to the class-I aminoacyl-tRNA synthetase family. Glutamate--tRNA ligase type 1 subfamily. As to quaternary structure, monomer.

It is found in the cytoplasm. The catalysed reaction is tRNA(Glu) + L-glutamate + ATP = L-glutamyl-tRNA(Glu) + AMP + diphosphate. Functionally, catalyzes the attachment of glutamate to tRNA(Glu) in a two-step reaction: glutamate is first activated by ATP to form Glu-AMP and then transferred to the acceptor end of tRNA(Glu). The protein is Glutamate--tRNA ligase 2 of Paramagnetospirillum magneticum (strain ATCC 700264 / AMB-1) (Magnetospirillum magneticum).